The chain runs to 595 residues: Glycine betaine transporter BetP (595 aa).

Topologically, residues 1 to 59 are cytoplasmic; that stretch reads MTTSDPNPKPIVEDAQPEQITATEELAGLLENPTNLEGKLADAEEEIILEGEDTQASLN. A helical membrane pass occupies residues 60–80; the sequence is WSVIVPALVIVLATVVWGIGF. Topologically, residues 81–98 are periplasmic; the sequence is KDSFTNFASSALSAVVDN. Residues 99–119 traverse the membrane as a helical segment; the sequence is LGWAFILFGTVFVFFIVVIAA. The Cytoplasmic portion of the chain corresponds to 120–137; that stretch reads SKFGTIRLGRIDEAPEFR. A helical membrane pass occupies residues 138–158; the sequence is TVSWISMMFAAGMGIGLMFYG. Na(+)-binding residues include Ala-147, Ala-148, and Met-150. 152–153 provides a ligand contact to glycine betaine; the sequence is IG. At 159–185 the chain is on the periplasmic side; the sequence is TTEPLTFYRNGVPGHDEHNVGVAMSTT. The helical transmembrane segment at 186-206 threads the bilayer; sequence MFHWTLHPWAIYAIVGLAIAY. Residues 207–236 lie on the Cytoplasmic side of the membrane; the sequence is STFRVGRKQLLSSAFVPLIGEKGAEGWLGK. A helical membrane pass occupies residues 237-257; it reads LIDILAIIATVFGTACSLGLG. Position 253 (Ser-253) interacts with glycine betaine. The Periplasmic segment spans residues 258–276; the sequence is ALQIGAGLSAANIIEDPSD. Residues 277 to 296 traverse the membrane as a helical segment; it reads WTIVGIVSVLTLAFIFSAIS. Residues 297-299 lie on the Cytoplasmic side of the membrane; that stretch reads GVG. A helical transmembrane segment spans residues 300–323; that stretch reads KGIQYLSNANMVLAALLAIFVFVV. Na(+) is bound by residues Ser-306 and Met-310. At 324-365 the chain is on the periplasmic side; sequence GPTVSILNLLPGSIGNYLSNFFQMAGRTAMSADGTAGEWLGS. Residues 366–386 form a helical membrane-spanning segment; that stretch reads WTIFYWAWWISWSPFVGMFLA. 373-377 provides a ligand contact to glycine betaine; it reads WWISW. Residues 387–396 lie on the Cytoplasmic side of the membrane; it reads RISRGRSIRE. A helical membrane pass occupies residues 397 to 417; the sequence is FILGVLLVPAGVSTVWFSIFG. The Periplasmic portion of the chain corresponds to 418–451; the sequence is GTAIVFEQNGESIWGDGAAEEQLFGLLHALPGGQ. A helical membrane pass occupies residues 452 to 476; sequence IMGIIAMILLGTFFITSADSASTVM. Residues 477-489 lie on the Cytoplasmic side of the membrane; the sequence is GTMSQHGQLEANK. The chain crosses the membrane as a helical span at residues 490 to 510; that stretch reads WVTAAWGVATAAIGLTLLLSG. Residues 511 to 520 are Periplasmic-facing; that stretch reads GDNALSNLQN. A helical transmembrane segment spans residues 521–541; that stretch reads VTIVAATPFLFVVIGLMFALV. Topologically, residues 542–595 are cytoplasmic; it reads KDLSNDVIYLEYREQQRFNARLARERRVHNEHRKRELAAKRRRERKASGAGKRR. The segment at 570 to 595 is disordered; that stretch reads HNEHRKRELAAKRRRERKASGAGKRR. Basic residues predominate over residues 581–595; it reads KRRRERKASGAGKRR.

It belongs to the BCCT transporter (TC 2.A.15) family. In terms of assembly, homotrimer. The monomer can accumulate glycine betaine, but trimerization is required to properly respond to osmotic stress.

Its subcellular location is the cell inner membrane. Its activity is regulated as follows. Uptake is activated by hyperosmotic stress. Osmoresponsive activation is triggered by a change in the internal K(+) concentration. In addition, shows a pronounced chill stimulation, at temperatures around 10 degrees Celsius. Chill activation may be influenced by the membrane lipid composition. Uptake is completely abolished by the uncoupler CCCP, and to a different extent by the ionophores valinomycin and nigericin. Involved in response to osmotic stress. High-affinity glycine betaine-specific uptake system, which couples the uptake of glycine betaine to the symport of two Na(+) ions. Transport is driven both by the Na(+) gradient and by the electrical potential. In addition, functions both as an osmosensor and as an osmoregulator that transduces signal to the catalytic part of the carrier protein, which adapts its activity to the extent of osmotic stress. The chain is Glycine betaine transporter BetP from Corynebacterium glutamicum (strain ATCC 13032 / DSM 20300 / JCM 1318 / BCRC 11384 / CCUG 27702 / LMG 3730 / NBRC 12168 / NCIMB 10025 / NRRL B-2784 / 534).